The primary structure comprises 212 residues: Guanylate kinase (212 aa).

The Guanylate kinase-like domain occupies 14-192; sequence GTALVICAPS…AYDELRATYL (179 aa). ATP is bound at residue 21–28; the sequence is APSGTGKT.

The protein belongs to the guanylate kinase family.

It localises to the cytoplasm. It catalyses the reaction GMP + ATP = GDP + ADP. Its function is as follows. Essential for recycling GMP and indirectly, cGMP. The chain is Guanylate kinase from Lawsonia intracellularis (strain PHE/MN1-00).